A 633-amino-acid polypeptide reads, in one-letter code: Extracellular metalloproteinase 3 (633 aa).

An N-terminal signal peptide occupies residues 1–18 (MHGLLLAGLLALPMNVLA). A propeptide spanning residues 19–246 (HPAEQHASNV…VHNVVDYVAS (228 aa)) is cleaved from the precursor. Asn410 carries an N-linked (GlcNAc...) asparagine glycan. His429 is a binding site for Zn(2+). Residue Glu430 is part of the active site. His433 is a Zn(2+) binding site. N-linked (GlcNAc...) asparagine glycosylation is found at Asn480 and Asn622.

The protein belongs to the peptidase M36 family. Requires Zn(2+) as cofactor.

It localises to the secreted. In terms of biological role, secreted metalloproteinase probably acting as a virulence factor. The sequence is that of Extracellular metalloproteinase 3 (MEP3) from Trichophyton tonsurans (Scalp ringworm fungus).